The following is a 223-amino-acid chain: Cytidylate kinase (223 aa).

10–18 (GPAGSGKSS) is a binding site for ATP.

It belongs to the cytidylate kinase family. Type 1 subfamily.

It localises to the cytoplasm. The enzyme catalyses CMP + ATP = CDP + ADP. The catalysed reaction is dCMP + ATP = dCDP + ADP. The protein is Cytidylate kinase of Pseudothermotoga lettingae (strain ATCC BAA-301 / DSM 14385 / NBRC 107922 / TMO) (Thermotoga lettingae).